The primary structure comprises 860 residues: Elastin (860 aa).

The first 27 residues, 1–27 (MAGLTAVVPQPGVLLILLLNLLHPAQP), serve as a signal peptide directing secretion. Residues proline 35 and proline 72 each carry the 4-hydroxyproline modification. Hydroxyproline is present on proline 84. The residue at position 105 (proline 105) is a 4-hydroxyproline. Lysine 123 and lysine 127 each carry allysine. Residues proline 217, proline 230, proline 233, and proline 253 each carry the 4-hydroxyproline modification. 3 positions are modified to allysine: lysine 299, lysine 318, and lysine 321. Position 346 is a 4-hydroxyproline (proline 346). Lysine 368 and lysine 371 each carry allysine. The residue at position 383 (proline 383) is a Hydroxyproline. 2 positions are modified to 4-hydroxyproline: proline 399 and proline 405. A hydroxyproline mark is found at proline 410 and proline 415. Allysine occurs at positions 431, 435, 438, 481, and 484. Proline 498 and proline 519 each carry 4-hydroxyproline. Lysine 534, lysine 595, lysine 599, and lysine 603 each carry allysine. 4-hydroxyproline occurs at positions 617, 626, 644, 653, and 661. Residues lysine 668 and lysine 671 each carry the allysine modification. A 4-hydroxyproline modification is found at proline 702. 4 positions are modified to allysine: lysine 719, lysine 723, lysine 783, and lysine 786. Proline 832 carries the post-translational modification 4-hydroxyproline. Cysteine 850 and cysteine 855 form a disulfide bridge.

This sequence belongs to the elastin family. The polymeric elastin chains are cross-linked together into an extensible 3D network. Forms a ternary complex with BGN and MFAP2. Interacts with MFAP2 via divalent cations (calcium &gt; magnesium &gt; manganese) in a dose-dependent and saturating manner. Interacts with FBLN5 and FBN1. Forms a ternary complex with FBN1 and FBLN2 or FBLN5. Interacts with MFAP4 in a Ca (2+)-dependent manner; this interaction promotes ELN self-assembly. Interacts with EFEMP2 with moderate affinity. In terms of processing, elastin is formed through the cross-linking of its soluble precursor tropoelastin. Cross-linking is initiated through the action of lysyl oxidase on exposed lysines to form allysine. Subsequent spontaneous condensation reactions with other allysine or unmodified lysine residues result in various bi-, tri-, and tetrafunctional cross-links. The most abundant cross-links in mature elastin fibers are lysinonorleucine, allysine aldol, desmosine, and isodesmosine. Post-translationally, hydroxylation on proline residues within the sequence motif, GXPG, is most likely to be 4-hydroxy as this fits the requirement for 4-hydroxylation in vertebrates.

The protein resides in the secreted. The protein localises to the extracellular space. It localises to the extracellular matrix. Its function is as follows. Major structural protein of tissues such as aorta and nuchal ligament, which must expand rapidly and recover completely. Molecular determinant of the late arterial morphogenesis, stabilizing arterial structure by regulating proliferation and organization of vascular smooth muscle. In Mus musculus (Mouse), this protein is Elastin (Eln).